Consider the following 419-residue polypeptide: Voltage-gated potassium channel subunit beta-1 (419 aa).

A disordered region spans residues 1-52 (MLAARTGAAGSQISEENTKLRRQSGFSVAGKDKSPKKASENAKDSSLSPSGE). Residues 30 to 43 (GKDKSPKKASENAK) are compositionally biased toward basic and acidic residues. T108, W109, Q115, and D137 together coordinate NADP(+). Residue Y142 is the Proton donor/acceptor of the active site. Residues N210, S240, R241, Q266, W295, S296, P297, L298, A299, C300, K306, R316, G375, S377, Q381, E384, and N385 each coordinate NADP(+).

This sequence belongs to the shaker potassium channel beta subunit family. In terms of assembly, homotetramer. Interaction with tetrameric potassium channel alpha subunits gives rise to a heterooctamer. Identified in potassium channel complexes containing KCNA1, KCNA2, KCNA4, KCNA5, KCNA6, KCNAB1 and KCNAB2. Part of a complex containing KCNA1, KCNA4 and LGI1; interaction with LGI1 inhibits down-regulation of KCNA1 channel activity. Interacts with the dimer formed by GNB1 and GNG2; this enhances KCNA1 binding. Interacts with SQSTM1. In terms of tissue distribution, in brain, expression is most prominent in caudate nucleus, hippocampus and thalamus. Significant expression also detected in amygdala and subthalamic nucleus. Also expressed in both healthy and cardiomyopathic heart. Up to four times more abundant in left ventricle than left atrium.

The protein localises to the cytoplasm. It is found in the membrane. The protein resides in the cell membrane. It catalyses the reaction a primary alcohol + NADP(+) = an aldehyde + NADPH + H(+). The catalysed reaction is a secondary alcohol + NADP(+) = a ketone + NADPH + H(+). In terms of biological role, regulatory subunit of the voltage-gated potassium (Kv) Shaker channels composed of pore-forming and potassium-conducting alpha subunits and of regulatory beta subunits. The beta-1/KCNAB1 cytoplasmic subunit mediates closure of delayed rectifier potassium channels by physically obstructing the pore via its N-terminal domain and increases the speed of channel closure for other family members. Promotes the inactivation of Kv1.1/KCNA1, Kv1.2/KCNA2, Kv1.4/KCNA4, Kv1.5/KCNA5 and Kv1.6/KCNA6 alpha subunit-containing channels. Displays nicotinamide adenine dinucleotide phosphate (NADPH)-dependent aldoketoreductase activity by catalyzing the NADPH-dependent reduction of a variety of endogenous aldehydes and ketones. The binding of NADPH is required for efficient down-regulation of potassium channel activity. Oxidation of the bound NADPH restrains N-terminal domain from blocking the channel, thereby decreasing N-type inactivation of potassium channel activity. Its function is as follows. Isoform KvB1.2 shows no effect on KCNA1, KCNA2 or KCNB1. This Homo sapiens (Human) protein is Voltage-gated potassium channel subunit beta-1.